The following is a 115-amino-acid chain: Protamine-2 (115 aa).

The tract at residues 1-115 is disordered; that stretch reads MVRCHVKSPT…RRRRRCGRQL (115 aa). Position 8 is a phosphoserine (S8). A compositionally biased stretch (basic and acidic residues) spans 24-38; it reads ETEHPDQARELRPED. Composition is skewed to basic residues over residues 44–79 and 102–115; these read RTHR…RRRG and RRMR…GRQL.

It belongs to the protamine P2 family. As to quaternary structure, interacts with TDRP. Proteolytic processing into mature chains is required for histone eviction during spermatogenesis. Transition proteins (TNP1 and TNP2) are required for processing. As to expression, testis.

The protein resides in the nucleus. Its subcellular location is the chromosome. Its function is as follows. Protamines substitute for histones in the chromatin of sperm during the haploid phase of spermatogenesis. They compact sperm DNA into a highly condensed, stable and inactive complex. This Bos taurus (Bovine) protein is Protamine-2 (PRM2).